The primary structure comprises 356 residues: Alanine racemase, catabolic (356 aa).

The active-site Proton acceptor; specific for D-alanine is Lys35. Lys35 is subject to N6-(pyridoxal phosphate)lysine. Arg130 provides a ligand contact to substrate. Residue Tyr253 is the Proton acceptor; specific for L-alanine of the active site. A substrate-binding site is contributed by Met301.

This sequence belongs to the alanine racemase family. In terms of assembly, monomer. Pyridoxal 5'-phosphate is required as a cofactor.

It catalyses the reaction L-alanine = D-alanine. Its activity is regulated as follows. Inactivated by D- and L-beta-fluoroalanine, D- and L-beta-chloroalanine, and O-acetyl-D-serine. Isomerizes L-alanine to D-alanine which is then oxidized to pyruvate by DadA. The protein is Alanine racemase, catabolic (dadX) of Salmonella typhimurium (strain LT2 / SGSC1412 / ATCC 700720).